We begin with the raw amino-acid sequence, 208 residues long: Protein-L-isoaspartate O-methyltransferase (208 aa).

Residue Ser59 is part of the active site.

Belongs to the methyltransferase superfamily. L-isoaspartyl/D-aspartyl protein methyltransferase family.

Its subcellular location is the cytoplasm. It carries out the reaction [protein]-L-isoaspartate + S-adenosyl-L-methionine = [protein]-L-isoaspartate alpha-methyl ester + S-adenosyl-L-homocysteine. In terms of biological role, catalyzes the methyl esterification of L-isoaspartyl residues in peptides and proteins that result from spontaneous decomposition of normal L-aspartyl and L-asparaginyl residues. It plays a role in the repair and/or degradation of damaged proteins. This chain is Protein-L-isoaspartate O-methyltransferase, found in Sodalis glossinidius (strain morsitans).